A 250-amino-acid polypeptide reads, in one-letter code: NH(3)-dependent NAD(+) synthetase (250 aa).

Residue 31-38 (GISGGIDS) coordinates ATP. D37 serves as a coordination point for Mg(2+). R122 is a binding site for deamido-NAD(+). T142 provides a ligand contact to ATP. Position 147 (E147) interacts with Mg(2+). K155 and D162 together coordinate deamido-NAD(+). Positions 171 and 193 each coordinate ATP. 239–240 (HK) is a binding site for deamido-NAD(+).

Belongs to the NAD synthetase family. Homodimer.

It carries out the reaction deamido-NAD(+) + NH4(+) + ATP = AMP + diphosphate + NAD(+) + H(+). It participates in cofactor biosynthesis; NAD(+) biosynthesis; NAD(+) from deamido-NAD(+) (ammonia route): step 1/1. Catalyzes the ATP-dependent amidation of deamido-NAD to form NAD. Uses ammonia as a nitrogen source. In Alkaliphilus oremlandii (strain OhILAs) (Clostridium oremlandii (strain OhILAs)), this protein is NH(3)-dependent NAD(+) synthetase.